The sequence spans 43 residues: Protein PsbN (43 aa).

Residues 5-27 (TLVAISISGSLVSFTGYALYTAF) form a helical membrane-spanning segment.

It belongs to the PsbN family.

The protein resides in the plastid. The protein localises to the chloroplast thylakoid membrane. May play a role in photosystem I and II biogenesis. The protein is Protein PsbN of Drimys granadensis.